Consider the following 338-residue polypeptide: N-acetyl-gamma-glutamyl-phosphate reductase (338 aa).

Cys-148 is an active-site residue.

Belongs to the NAGSA dehydrogenase family. Type 1 subfamily.

The protein resides in the cytoplasm. It carries out the reaction N-acetyl-L-glutamate 5-semialdehyde + phosphate + NADP(+) = N-acetyl-L-glutamyl 5-phosphate + NADPH + H(+). It participates in amino-acid biosynthesis; L-arginine biosynthesis; N(2)-acetyl-L-ornithine from L-glutamate: step 3/4. Functionally, catalyzes the NADPH-dependent reduction of N-acetyl-5-glutamyl phosphate to yield N-acetyl-L-glutamate 5-semialdehyde. This Leptospira interrogans serogroup Icterohaemorrhagiae serovar copenhageni (strain Fiocruz L1-130) protein is N-acetyl-gamma-glutamyl-phosphate reductase.